Consider the following 347-residue polypeptide: Glycerol-1-phosphate dehydrogenase [NAD(P)+] (347 aa).

NAD(+) contacts are provided by residues 94–98 and 116–119; these read GKVID and TAAS. Asp-121 contacts substrate. Ser-125 contacts NAD(+). Residue Asp-168 coordinates substrate. Zn(2+) contacts are provided by Asp-168 and His-248. A substrate-binding site is contributed by His-252. A Zn(2+)-binding site is contributed by His-264.

Belongs to the glycerol-1-phosphate dehydrogenase family. In terms of assembly, homooctamer. Requires Zn(2+) as cofactor.

Its subcellular location is the cytoplasm. The enzyme catalyses sn-glycerol 1-phosphate + NAD(+) = dihydroxyacetone phosphate + NADH + H(+). It carries out the reaction sn-glycerol 1-phosphate + NADP(+) = dihydroxyacetone phosphate + NADPH + H(+). It participates in membrane lipid metabolism; glycerophospholipid metabolism. Its activity is regulated as follows. Partially inhibited by divalent metal cations such as Co(2+), Cu(2+) and Ni(2+). Its function is as follows. Catalyzes the NAD(P)H-dependent reduction of dihydroxyacetonephosphate (DHAP or glycerone phosphate) to glycerol 1-phosphate (G1P). The G1P thus generated is used as the glycerophosphate backbone of phospholipids in the cellular membranes of Archaea. Is also able to catalyze the reverse reaction, i.e. the NAD(P)(+)-dependent oxidation of G1P but not of G3P. Is not active toward glycerol, dihydroxyacetone, glyceraldehyde-3-phosphate, glyceraldehyde and glycerol-2-phosphate. This Methanothermobacter thermautotrophicus (strain ATCC 29096 / DSM 1053 / JCM 10044 / NBRC 100330 / Delta H) (Methanobacterium thermoautotrophicum) protein is Glycerol-1-phosphate dehydrogenase [NAD(P)+] (egsA).